A 472-amino-acid chain; its full sequence is tRNA modification GTPase MnmE (472 aa).

3 residues coordinate (6S)-5-formyl-5,6,7,8-tetrahydrofolate: Arg28, Glu91, and Lys130. The TrmE-type G domain occupies 225 to 391 (GAKVVLAGKT…LSEKAYSVLA (167 aa)). Residue Asn235 coordinates K(+). Residues 235–240 (NAGKSS), 254–260 (SDIHGTT), and 279–282 (DTAG) contribute to the GTP site. Position 239 (Ser239) interacts with Mg(2+). 3 residues coordinate K(+): Ser254, Ile256, and Thr259. Residue Thr260 coordinates Mg(2+). Residue Lys472 coordinates (6S)-5-formyl-5,6,7,8-tetrahydrofolate.

Belongs to the TRAFAC class TrmE-Era-EngA-EngB-Septin-like GTPase superfamily. TrmE GTPase family. In terms of assembly, homodimer. Heterotetramer of two MnmE and two MnmG subunits. It depends on K(+) as a cofactor.

Its subcellular location is the cytoplasm. Its function is as follows. Exhibits a very high intrinsic GTPase hydrolysis rate. Involved in the addition of a carboxymethylaminomethyl (cmnm) group at the wobble position (U34) of certain tRNAs, forming tRNA-cmnm(5)s(2)U34. The sequence is that of tRNA modification GTPase MnmE from Treponema denticola (strain ATCC 35405 / DSM 14222 / CIP 103919 / JCM 8153 / KCTC 15104).